The chain runs to 110 residues: Large ribosomal subunit protein uL22 (110 aa).

This sequence belongs to the universal ribosomal protein uL22 family. In terms of assembly, part of the 50S ribosomal subunit.

Functionally, this protein binds specifically to 23S rRNA; its binding is stimulated by other ribosomal proteins, e.g. L4, L17, and L20. It is important during the early stages of 50S assembly. It makes multiple contacts with different domains of the 23S rRNA in the assembled 50S subunit and ribosome. The globular domain of the protein is located near the polypeptide exit tunnel on the outside of the subunit, while an extended beta-hairpin is found that lines the wall of the exit tunnel in the center of the 70S ribosome. In Alkaliphilus metalliredigens (strain QYMF), this protein is Large ribosomal subunit protein uL22.